A 69-amino-acid polypeptide reads, in one-letter code: DNA gyrase inhibitor YacG (69 aa).

4 residues coordinate Zn(2+): cysteine 7, cysteine 10, cysteine 26, and cysteine 30.

The protein belongs to the DNA gyrase inhibitor YacG family. As to quaternary structure, interacts with GyrB. The cofactor is Zn(2+).

In terms of biological role, inhibits all the catalytic activities of DNA gyrase by preventing its interaction with DNA. Acts by binding directly to the C-terminal domain of GyrB, which probably disrupts DNA binding by the gyrase. The chain is DNA gyrase inhibitor YacG from Shewanella baltica (strain OS223).